The chain runs to 198 residues: Uracil phosphoribosyltransferase homolog (198 aa).

Belongs to the UPRTase family.

Its subcellular location is the plastid. It is found in the chloroplast. This is Uracil phosphoribosyltransferase homolog from Porphyra purpurea (Red seaweed).